Reading from the N-terminus, the 162-residue chain is Interleukin-15 (162 aa).

An N-terminal signal peptide occupies residues 1 to 29 (MRILKPHLRSTSIQCYLCLLLNSHFLTEA). Residues 30–48 (GIHVFILGCISAGLPKTEA) constitute a propeptide that is removed on maturation. 2 disulfide bridges follow: Cys-83–Cys-133 and Cys-90–Cys-136. An N-linked (GlcNAc...) asparagine glycan is attached at Asn-108.

Belongs to the IL-15/IL-21 family.

It localises to the secreted. Its function is as follows. Cytokine that plays a major role in the development of inflammatory and protective immune responses to microbial invaders and parasites by modulating immune cells of both the innate and adaptive immune systems. Stimulates the proliferation of natural killer cells, T-cells and B-cells and promotes the secretion of several cytokines. In monocytes, induces the production of IL8 and monocyte chemotactic protein 1/CCL2, two chemokines that attract neutrophils and monocytes respectively to sites of infection. Unlike most cytokines, which are secreted in soluble form, IL15 is expressed in association with its high affinity IL15RA on the surface of IL15-producing cells and delivers signals to target cells that express IL2RB and IL2RG receptor subunits. Binding to its receptor triggers the phosphorylation of JAK1 and JAK3 and the recruitment and subsequent phosphorylation of signal transducer and activator of transcription-3/STAT3 and STAT5. In mast cells, induces the rapid tyrosine phosphorylation of STAT6 and thereby controls mast cell survival and release of cytokines such as IL4. The chain is Interleukin-15 (IL15) from Ailuropoda melanoleuca (Giant panda).